The chain runs to 419 residues: Argininosuccinate synthase (419 aa).

Residues 9-17 and Ala-35 contribute to the ATP site; that span reads AYSGGLDTS. L-citrulline is bound by residues Tyr-86 and Ser-91. 114-122 is a binding site for ATP; it reads AHGATGKGN. L-aspartate is bound by residues Thr-118, Asn-122, and Asp-123. Asn-122 provides a ligand contact to L-citrulline. L-citrulline contacts are provided by Arg-126, Ser-179, Ser-188, Glu-270, and Tyr-282.

This sequence belongs to the argininosuccinate synthase family. Type 1 subfamily. As to quaternary structure, homotetramer.

It catalyses the reaction L-citrulline + L-aspartate + ATP = 2-(N(omega)-L-arginino)succinate + AMP + diphosphate + H(+). It participates in amino-acid biosynthesis; L-arginine biosynthesis; L-arginine from L-ornithine and carbamoyl phosphate: step 2/3. It functions in the pathway nitrogen metabolism; urea cycle; (N(omega)-L-arginino)succinate from L-aspartate and L-citrulline: step 1/1. This is Argininosuccinate synthase from Drosophila melanogaster (Fruit fly).